Consider the following 143-residue polypeptide: S-adenosylmethionine decarboxylase proenzyme (143 aa).

The Schiff-base intermediate with substrate; via pyruvic acid role is filled by serine 66. Serine 66 carries the pyruvic acid (Ser); by autocatalysis modification. Residue histidine 71 is the Proton acceptor; for processing activity of the active site. Cysteine 86 (proton donor; for catalytic activity) is an active-site residue.

Belongs to the prokaryotic AdoMetDC family. Type 1 subfamily. As to quaternary structure, heterotetramer of two alpha and two beta chains arranged as a dimer of alpha/beta heterodimers. The cofactor is pyruvate. In terms of processing, is synthesized initially as an inactive proenzyme. Formation of the active enzyme involves a self-maturation process in which the active site pyruvoyl group is generated from an internal serine residue via an autocatalytic post-translational modification. Two non-identical subunits are generated from the proenzyme in this reaction, and the pyruvate is formed at the N-terminus of the alpha chain, which is derived from the carboxyl end of the proenzyme. The post-translation cleavage follows an unusual pathway, termed non-hydrolytic serinolysis, in which the side chain hydroxyl group of the serine supplies its oxygen atom to form the C-terminus of the beta chain, while the remainder of the serine residue undergoes an oxidative deamination to produce ammonia and the pyruvoyl group blocking the N-terminus of the alpha chain.

It catalyses the reaction S-adenosyl-L-methionine + H(+) = S-adenosyl 3-(methylsulfanyl)propylamine + CO2. It functions in the pathway amine and polyamine biosynthesis; S-adenosylmethioninamine biosynthesis; S-adenosylmethioninamine from S-adenosyl-L-methionine: step 1/1. Catalyzes the decarboxylation of S-adenosylmethionine to S-adenosylmethioninamine (dcAdoMet), the propylamine donor required for the synthesis of the polyamines spermine and spermidine from the diamine putrescine. The chain is S-adenosylmethionine decarboxylase proenzyme from Thermococcus kodakarensis (strain ATCC BAA-918 / JCM 12380 / KOD1) (Pyrococcus kodakaraensis (strain KOD1)).